The primary structure comprises 386 residues: Heat-inducible transcription repressor HrcA (386 aa).

The protein belongs to the HrcA family.

Functionally, negative regulator of class I heat shock genes (grpE-dnaK-dnaJ and groELS operons). Prevents heat-shock induction of these operons. In Chlamydia caviae (strain ATCC VR-813 / DSM 19441 / 03DC25 / GPIC) (Chlamydophila caviae), this protein is Heat-inducible transcription repressor HrcA.